Consider the following 31-residue polypeptide: Cytochrome b6-f complex subunit 6 (31 aa).

Residues 4-24 form a helical membrane-spanning segment; that stretch reads IFSYIALLLSALVITLTCYIG.

This sequence belongs to the PetL family. As to quaternary structure, the 4 large subunits of the cytochrome b6-f complex are cytochrome b6, subunit IV (17 kDa polypeptide, PetD), cytochrome f and the Rieske protein, while the 4 small subunits are PetG, PetL, PetM and PetN. The complex functions as a dimer.

It is found in the plastid. The protein resides in the chloroplast thylakoid membrane. Its function is as follows. Component of the cytochrome b6-f complex, which mediates electron transfer between photosystem II (PSII) and photosystem I (PSI), cyclic electron flow around PSI, and state transitions. PetL is important for photoautotrophic growth as well as for electron transfer efficiency and stability of the cytochrome b6-f complex. The sequence is that of Cytochrome b6-f complex subunit 6 from Chlorella vulgaris (Green alga).